Consider the following 199-residue polypeptide: Probable GTP-binding protein EngB (199 aa).

One can recognise an EngB-type G domain in the interval 28-199; that stretch reads DIPEIALAGR…QAWDAILEQI (172 aa). GTP-binding positions include 36 to 43, 63 to 67, 81 to 84, 148 to 151, and 180 to 182; these read GRSNVGKS, GKTQL, DVPG, TKAD, and FSS. Residues Ser43 and Thr65 each contribute to the Mg(2+) site.

It belongs to the TRAFAC class TrmE-Era-EngA-EngB-Septin-like GTPase superfamily. EngB GTPase family. It depends on Mg(2+) as a cofactor.

Functionally, necessary for normal cell division and for the maintenance of normal septation. The sequence is that of Probable GTP-binding protein EngB from Streptococcus uberis (strain ATCC BAA-854 / 0140J).